An 876-amino-acid polypeptide reads, in one-letter code: Leucine--tRNA ligase (876 aa).

Positions 43–53 (PYPSGRIHMGH) match the 'HIGH' region motif. The short motif at 630–634 (KMSKS) is the 'KMSKS' region element. K633 contacts ATP.

The protein belongs to the class-I aminoacyl-tRNA synthetase family.

The protein resides in the cytoplasm. The catalysed reaction is tRNA(Leu) + L-leucine + ATP = L-leucyl-tRNA(Leu) + AMP + diphosphate. This chain is Leucine--tRNA ligase, found in Methylocella silvestris (strain DSM 15510 / CIP 108128 / LMG 27833 / NCIMB 13906 / BL2).